A 262-amino-acid chain; its full sequence is Trypsin theta (262 aa).

A signal peptide spans 1 to 19 (MHRLVVLLVCLAVGSACAG). The propeptide at 20 to 34 (TVGVSNGDPFEREGR) is activation peptide. The region spanning 35–260 (IVGGEDTTIG…LRKWILNASE (226 aa)) is the Peptidase S1 domain. A disulfide bridge connects residues cysteine 61 and cysteine 77. Catalysis depends on charge relay system residues histidine 76 and aspartate 121. 2 cysteine pairs are disulfide-bonded: cysteine 186–cysteine 203 and cysteine 212–cysteine 236. The active-site Charge relay system is the serine 216.

This sequence belongs to the peptidase S1 family.

Its subcellular location is the secreted. It is found in the extracellular space. The catalysed reaction is Preferential cleavage: Arg-|-Xaa, Lys-|-Xaa.. This is Trypsin theta (thetaTry) from Drosophila melanogaster (Fruit fly).